Consider the following 334-residue polypeptide: Anthranilate phosphoribosyltransferase (334 aa).

5-phospho-alpha-D-ribose 1-diphosphate contacts are provided by residues glycine 79, 82-83, serine 87, 89-92, 107-115, and serine 119; these read GD, NIST, and KAGNRSISS. Glycine 79 is an anthranilate binding site. Mg(2+) is bound at residue serine 91. Asparagine 110 is a binding site for anthranilate. An anthranilate-binding site is contributed by arginine 165. Mg(2+) contacts are provided by aspartate 224 and glutamate 225.

This sequence belongs to the anthranilate phosphoribosyltransferase family. Homodimer. The cofactor is Mg(2+).

The catalysed reaction is N-(5-phospho-beta-D-ribosyl)anthranilate + diphosphate = 5-phospho-alpha-D-ribose 1-diphosphate + anthranilate. Its pathway is amino-acid biosynthesis; L-tryptophan biosynthesis; L-tryptophan from chorismate: step 2/5. In terms of biological role, catalyzes the transfer of the phosphoribosyl group of 5-phosphorylribose-1-pyrophosphate (PRPP) to anthranilate to yield N-(5'-phosphoribosyl)-anthranilate (PRA). This is Anthranilate phosphoribosyltransferase from Streptococcus thermophilus (strain CNRZ 1066).